A 413-amino-acid chain; its full sequence is Probable inactive allantoicase (413 aa).

The protein belongs to the allantoicase family.

The function of this enzyme is unclear as allantoicase activity is not known to exist in mammals. The protein is Probable inactive allantoicase of Rattus norvegicus (Rat).